The sequence spans 132 residues: Transcription antitermination protein NusB (132 aa).

It belongs to the NusB family.

Its function is as follows. Involved in transcription antitermination. Required for transcription of ribosomal RNA (rRNA) genes. Binds specifically to the boxA antiterminator sequence of the ribosomal RNA (rrn) operons. In Sulfurimonas denitrificans (strain ATCC 33889 / DSM 1251) (Thiomicrospira denitrificans (strain ATCC 33889 / DSM 1251)), this protein is Transcription antitermination protein NusB.